Reading from the N-terminus, the 449-residue chain is MRFAYGRLPWRRGAVLGSALLVLVTAPAASTATERSGPAPARSVILLIGDGMGDAEITAARNYSVGAAGRLAMDTLDASGRRTTYAVDERGRPVYVTDSAAGATAWATGRRTVNGRVSKSHDTDRPMPTLLELARDRGYATGSVTTASVADATPAALTAHVTDRSCKGPADMAACPADTRAGGGEGSIAEQTVAARPDVLLGGGADHFAQTVTDGPFRGRTVTQQARAAGYQVVRDRTQLAAARPGRPVLGLFAPEYVPVEWTGPPAAPGGTAPQRCATRNPGRPAGTPDLAESTRAALDLLTARAHHRGAPGRGFFLQVEGASIDDRAHEADPCGQLGETLAFDRAVAAALDHAERHPRTLVIVTADHGHATQILPHDARPAGLSATLVTDEGGVMQLGYGTALPGETQEHTGVPVPVAARGPLADRVRGVQDNTSLFGTVTAALGLR.

The signal sequence occupies residues 1–32 (MRFAYGRLPWRRGAVLGSALLVLVTAPAASTA). Aspartate 50 contributes to the Mg(2+) binding site. Residue aspartate 50 participates in Zn(2+) binding. Residue serine 99 is the Phosphoserine intermediate of the active site. 2 residues coordinate Mg(2+): aspartate 151 and threonine 153. The tract at residues 268 to 290 (APGGTAPQRCATRNPGRPAGTPD) is disordered. Glutamate 321 is a Mg(2+) binding site. Zn(2+)-binding residues include aspartate 326, histidine 330, aspartate 368, histidine 369, and histidine 412.

Belongs to the alkaline phosphatase family. Mg(2+) serves as cofactor. The cofactor is Zn(2+).

It localises to the secreted. It carries out the reaction streptomycin 6-phosphate + H2O = streptomycin + phosphate. It functions in the pathway antibiotic biosynthesis; streptomycin biosynthesis. Functionally, specifically cleaves both streptomycin-6-phosphate and, more slowly, streptomycin-3''-phosphate during the biosynthesis of streptomycin. The polypeptide is Streptomycin-6-phosphate phosphatase (strK) (Streptomyces griseus).